We begin with the raw amino-acid sequence, 372 residues long: Citrate/2-methylcitrate synthase (372 aa).

Substrate is bound at residue His188. Residue His223 is part of the active site. 256 to 260 (KIMGF) is a CoA binding site. His262 is a catalytic residue. Arg272 is a substrate binding site. Residue Asp314 is part of the active site. Arg339 and Arg358 together coordinate substrate.

Belongs to the citrate synthase family.

It catalyses the reaction propanoyl-CoA + oxaloacetate + H2O = 2-methylcitrate + CoA + H(+). The catalysed reaction is oxaloacetate + acetyl-CoA + H2O = citrate + CoA + H(+). It functions in the pathway carbohydrate metabolism; tricarboxylic acid cycle; isocitrate from oxaloacetate: step 1/2. Functionally, involved in both the tricarboxylic acid (TCA) and methylcitric acid cycles. Has both 2-methylcitrate synthase and citrate synthase activities. Catalyzes the condensation of propionyl-CoA and oxaloacetate to yield 2-methylcitrate (2-MC) and CoA, and the condensation of acetyl-CoA and oxaloacetate to yield citrate and CoA. Has 2.3-fold higher activity as a 2-methylcitrate synthase. Catalyzes the formation of either (2S,3R)- or (2R,3S)-2-methylcitrate. This is Citrate/2-methylcitrate synthase from Bacillus subtilis (strain 168).